Reading from the N-terminus, the 252-residue chain is 3-dehydroquinate dehydratase (252 aa).

3-dehydroquinate contacts are provided by residues Ser21, Glu46–Arg48, and Arg82. His143 acts as the Proton donor/acceptor in catalysis. Residue Lys170 is the Schiff-base intermediate with substrate of the active site. 3-dehydroquinate is bound by residues Arg213, Ser232, and Gln236.

It belongs to the type-I 3-dehydroquinase family. As to quaternary structure, homodimer.

The enzyme catalyses 3-dehydroquinate = 3-dehydroshikimate + H2O. It functions in the pathway metabolic intermediate biosynthesis; chorismate biosynthesis; chorismate from D-erythrose 4-phosphate and phosphoenolpyruvate: step 3/7. Its function is as follows. Involved in the third step of the chorismate pathway, which leads to the biosynthesis of aromatic amino acids. Catalyzes the cis-dehydration of 3-dehydroquinate (DHQ) and introduces the first double bond of the aromatic ring to yield 3-dehydroshikimate. This Salmonella paratyphi A (strain ATCC 9150 / SARB42) protein is 3-dehydroquinate dehydratase.